Reading from the N-terminus, the 334-residue chain is tRNA N6-adenosine threonylcarbamoyltransferase (334 aa).

Fe cation contacts are provided by histidine 110 and histidine 114. Residues 133 to 137 (IVSGG), aspartate 166, glycine 179, aspartate 183, and asparagine 275 contribute to the substrate site. Aspartate 303 contributes to the Fe cation binding site.

The protein belongs to the KAE1 / TsaD family. The cofactor is Fe(2+).

It localises to the cytoplasm. The enzyme catalyses L-threonylcarbamoyladenylate + adenosine(37) in tRNA = N(6)-L-threonylcarbamoyladenosine(37) in tRNA + AMP + H(+). Functionally, required for the formation of a threonylcarbamoyl group on adenosine at position 37 (t(6)A37) in tRNAs that read codons beginning with adenine. Is involved in the transfer of the threonylcarbamoyl moiety of threonylcarbamoyl-AMP (TC-AMP) to the N6 group of A37, together with TsaE and TsaB. TsaD likely plays a direct catalytic role in this reaction. The protein is tRNA N6-adenosine threonylcarbamoyltransferase of Salinibacter ruber (strain DSM 13855 / M31).